The following is a 336-amino-acid chain: MKTVVKSYFGSHLYGTSTPESDVDFKEIFVPPARDILIGNVKEHMSKNTNNTSSKNTKDNIDHELYSLKYFFKLAADGEPVALDMLHTPPELVVKSDLPDVWKFIQDNRSRFYTTNMKSYLGYVRKQASKYGVKGSRLAALRDVLKVVNQIPEQWVDYQEDGSIKQRRTKVEDIKHRLPENEFCEWVFHNHEKTGPQTFYTVLGRKYQTTLSLIELKQSLNKLDAEYGERARKAEANEGIDWKALSHACRGGLQLLEIYKTGDLVYPLQDAPFILDVKLGKHPFKTVQEFLEDVVDQVEAASTEASKNGMQQKVDMSFWDDFLERVYLENHRSYYK.

This is an uncharacterized protein from Enterobacteria phage T4 (Bacteriophage T4).